Reading from the N-terminus, the 375-residue chain is B3 domain-containing protein REM-like 2 (375 aa).

3 consecutive DNA-binding regions (TF-B3) follow at residues 51 to 147 (SFVA…KRLY), 131 to 226 (FVTV…YGTN), and 277 to 375 (RLVI…KSGK).

It is found in the nucleus. This is B3 domain-containing protein REM-like 2 from Arabidopsis thaliana (Mouse-ear cress).